A 483-amino-acid chain; its full sequence is tRNA-2-methylthio-N(6)-dimethylallyladenosine synthase (483 aa).

The region spanning 31–148 (KKLYIETQGC…LPQMLDQHHA (118 aa)) is the MTTase N-terminal domain. [4Fe-4S] cluster-binding residues include Cys-40, Cys-77, Cys-111, Cys-192, Cys-196, and Cys-199. The Radical SAM core domain occupies 178-410 (RVEGFKAFVS…QQVIKQSSIE (233 aa)). Positions 413–477 (DAMLGKIERV…LNLVYGELLN (65 aa)) constitute a TRAM domain.

Belongs to the methylthiotransferase family. MiaB subfamily. As to quaternary structure, monomer. It depends on [4Fe-4S] cluster as a cofactor.

It localises to the cytoplasm. The enzyme catalyses N(6)-dimethylallyladenosine(37) in tRNA + (sulfur carrier)-SH + AH2 + 2 S-adenosyl-L-methionine = 2-methylsulfanyl-N(6)-dimethylallyladenosine(37) in tRNA + (sulfur carrier)-H + 5'-deoxyadenosine + L-methionine + A + S-adenosyl-L-homocysteine + 2 H(+). In terms of biological role, catalyzes the methylthiolation of N6-(dimethylallyl)adenosine (i(6)A), leading to the formation of 2-methylthio-N6-(dimethylallyl)adenosine (ms(2)i(6)A) at position 37 in tRNAs that read codons beginning with uridine. The protein is tRNA-2-methylthio-N(6)-dimethylallyladenosine synthase of Acinetobacter baumannii (strain AB0057).